A 355-amino-acid polypeptide reads, in one-letter code: NAD-dependent protein deacylase sirtuin-6 (355 aa).

The residue at position 2 (serine 2) is an N-acetylserine. Serine 10 bears the Phosphoserine mark. In terms of domain architecture, Deacetylase sirtuin-type spans 27-272; it reads PEELERKVWE…TRLMKHLGLE (246 aa). Lysine 33 carries the N6-acetyllysine modification. The NAD(+) site is built by alanine 53, threonine 57, phenylalanine 64, arginine 65, tryptophan 71, glutamine 113, and histidine 133. The active-site Proton acceptor is the histidine 133. Positions 141, 144, and 166 each coordinate Zn(2+). A Glycyl lysine isopeptide (Lys-Gly) (interchain with G-Cter in ubiquitin) cross-link involves residue lysine 170. Cysteine 177 provides a ligand contact to Zn(2+). NAD(+) is bound by residues glycine 214, serine 216, asparagine 240, glutamine 242, and valine 258. The disordered stretch occupies residues 284-355; it reads RALPPLPRPP…KRVKAEAVPS (72 aa). The segment covering 287–296 has biased composition (pro residues); it reads PPLPRPPTPK. Threonine 294 is subject to Phosphothreonine. Serine 303 and serine 330 each carry phosphoserine.

It belongs to the sirtuin family. Class IV subfamily. As to quaternary structure, homodimer; binds to nucleosomes and DNA ends as a homodimer. Interacts with RELA; interferes with RELA binding to target DNA. Interacts with SMARCA5; promoting recruitment of SMARCA5/SNF2H to double-strand breaks (DSBs) sites. Interacts with the mTORC2 complex; preventing the ability of SIRT6 to deacetylate FOXO1. Interacts with the CLOCK-BMAL1 complex; recruited by the CLOCK-BMAL1 complex to regulate expression of clock-controlled genes. Interacts with CSNK2A2; preventing CSNK2A2 localization to the nucleus. In terms of processing, acetylated at Lys-33. Deacetylation at Lys-33 by SIRT1 promotes homomultimerization and binding to double-strand breaks (DSBs) sites. Phosphorylation at Ser-10 by MAPK8/JNK1 in response to oxidative stress stimulates the mono-ADP-ribosyltransferase activity on PARP1, leading to PARP1 recruitment to double-strand breaks (DSBs). Post-translationally, monoubiquitinated at Lys-170 by STUB1/CHIP, preventing its degradation by the proteasome. In terms of processing, sumoylated, leading to specifically decrease ability to deacetylate histone H3 at 'Lys-56' (H3K56ac).

Its subcellular location is the nucleus. The protein resides in the chromosome. The protein localises to the telomere. It localises to the endoplasmic reticulum. The catalysed reaction is N(6)-acetyl-L-lysyl-[protein] + NAD(+) + H2O = 2''-O-acetyl-ADP-D-ribose + nicotinamide + L-lysyl-[protein]. It catalyses the reaction N(6)-tetradecanoyl-L-lysyl-[protein] + NAD(+) + H2O = 2''-O-tetradecanoyl-ADP-D-ribose + nicotinamide + L-lysyl-[protein]. It carries out the reaction N(6)-hexadecanoyl-L-lysyl-[protein] + NAD(+) + H2O = 2''-O-hexadecanoyl-ADP-D-ribose + nicotinamide + L-lysyl-[protein]. The enzyme catalyses L-lysyl-[protein] + NAD(+) = N(6)-(ADP-D-ribosyl)-L-lysyl-[protein] + nicotinamide + H(+). The catalysed reaction is L-arginyl-[protein] + NAD(+) = N(omega)-(ADP-D-ribosyl)-L-arginyl-[protein] + nicotinamide + H(+). Its activity is regulated as follows. Compared to the defatty-acylase activity, the protein deacetylase activity is weak in vitro, and requires activation. The histone deacetylase activity is strongly activated upon binding to nucleosomes and chromatin in vivo. Two molecules of SIRT6 associate with the acidic patch of one nucleosome, while the C-terminal disordered region of SIRT6 associates with nucleosomal DNA, leading to efficient histone deacetylation. The protein-lysine deacetylase activity is also activated by long-chain free fatty-acids. Functionally, NAD-dependent protein deacetylase, deacylase and mono-ADP-ribosyltransferase that plays an essential role in DNA damage repair, telomere maintenance, metabolic homeostasis, inflammation, tumorigenesis and aging. Displays protein-lysine deacetylase or defatty-acylase (demyristoylase and depalmitoylase) activity, depending on the context. Acts as a key histone deacetylase by catalyzing deacetylation of histone H3 at 'Lys-9', 'Lys-18' and 'Lys-56' (H3K9ac, H3K18ac and H3K56ac, respectively), suppressing target gene expression of several transcription factors, including NF-kappa-B. Acts as an inhibitor of transcription elongation by mediating deacetylation of H3K9ac and H3K56ac, preventing release of NELFE from chromatin and causing transcriptional pausing. Involved in DNA repair by promoting double-strand break (DSB) repair: acts as a DSB sensor by recognizing and binding DSB sites, leading to (1) recruitment of DNA repair proteins, such as SMARCA5/SNF2H, and (2) deacetylation of histone H3K9ac and H3K56ac. SIRT6 participation to DSB repair is probably involved in extension of life span. Also promotes DNA repair by deacetylating non-histone proteins, such as DDB2 and p53/TP53. Specifically deacetylates H3K18ac at pericentric heterochromatin, thereby maintaining pericentric heterochromatin silencing at centromeres and protecting against genomic instability and cellular senescence. Involved in telomere maintenance by catalyzing deacetylation of histone H3 in telomeric chromatin, regulating telomere position effect and telomere movement in response to DNA damage. Required for embryonic stem cell differentiation by mediating histone deacetylation of H3K9ac. Plays a major role in metabolism by regulating processes such as glycolysis, gluconeogenesis, insulin secretion and lipid metabolism. Inhibits glycolysis via histone deacetylase activity and by acting as a corepressor of the transcription factor HIF1A, thereby controlling the expression of multiple glycolytic genes. Has tumor suppressor activity by repressing glycolysis, thereby inhibiting the Warburg effect. Also regulates glycolysis and tumorigenesis by mediating deacetylation and nuclear export of non-histone proteins, such as isoform M2 of PKM (PKM2). Acts as a negative regulator of gluconeogenesis by mediating deacetylation of non-histone proteins, such as FOXO1 and KAT2A/GCN5. Promotes beta-oxidation of fatty acids during fasting by catalyzing deacetylation of NCOA2, inducing coactivation of PPARA. Acts as a regulator of lipid catabolism in brown adipocytes, both by catalyzing deacetylation of histones and non-histone proteins, such as FOXO1. Also acts as a regulator of circadian rhythms, both by regulating expression of clock-controlled genes involved in lipid and carbohydrate metabolism, and by catalyzing deacetylation of PER2. The defatty-acylase activity is specifically involved in regulation of protein secretion. Has high activity toward long-chain fatty acyl groups and mediates protein-lysine demyristoylation and depalmitoylation of target proteins, such as RRAS2 and TNF, thereby regulating their secretion. Also acts as a mono-ADP-ribosyltransferase by mediating mono-ADP-ribosylation of PARP1, TRIM28/KAP1 or SMARCC2/BAF170. Mono-ADP-ribosyltransferase activity is involved in DNA repair, cellular senescence, repression of LINE-1 retrotransposon elements and regulation of transcription. The sequence is that of NAD-dependent protein deacylase sirtuin-6 from Macaca fascicularis (Crab-eating macaque).